A 688-amino-acid chain; its full sequence is MTARKIFVTTALPYANGNFHIGHIMEYIQADTWVRAQRMQGNAVNFVGADDAHGAPIMIAAEKAGKTPQQFVADIAAGRKQYLDGFHIAFDNWSNTDSPENHELSQQIYLDLKAAGFIETRTIEQFFDPEKNMFLPDRFIKGECPRCHAKDQYGDNCEVCSSVYAPTDLINPYSALSGAKPVLKTSEHFFFKLSDPRAVEFLTEWTQNGQHVQPEVAAKIKEWFGTRTNPDGTTSEGLDDWDISRDAPYFGIEIPDAPGKYFYVWLDAPVGYLASLKNLLNKRGEDYDAYMADPQLEQYHFIGKDIITFHTLFWPAMLKFSGRKTPTKICVHGFMTVNNGEKMSKSRGTGLDPLKYLALGMNPEWLRYYLGAKLNGKNEDIDFNPEDFMARVNSDLIGKYVNIASRAAGFIFKRFGGKLGEVSADGQALLAQLREQAGPIVAAYEARDTARAVRETMLLCDRVNSYVDANKPWELAKQEGMEARLQDVCTTCIEAFRILTIYLKPILPQVAAEVARFLIVPPEQFAEVAQPLGAGHQIGQYQHLMQRVTQEQLDALFEPPAPAVEKVIPGGEEIAPTITIDDFAKVDLRIAKIVKCEAVEGSTKLLRLTLDVGEGQTRNVFSGIASMYKPKDLQGKLTVMVANLAPRKMKFGLSEGMVLAASHADEKAHPGIFVLEPFPGAQPGMRIH.

A 'HIGH' region motif is present at residues 13–23 (PYANGNFHIGH). Zn(2+)-binding residues include Cys-144, Cys-147, Cys-157, and Cys-160. The 'KMSKS' region signature appears at 342–346 (KMSKS). Lys-345 provides a ligand contact to ATP. Residues 582–688 (DFAKVDLRIA…PGAQPGMRIH (107 aa)) enclose the tRNA-binding domain.

It belongs to the class-I aminoacyl-tRNA synthetase family. MetG type 1 subfamily. As to quaternary structure, homodimer. The cofactor is Zn(2+).

Its subcellular location is the cytoplasm. The enzyme catalyses tRNA(Met) + L-methionine + ATP = L-methionyl-tRNA(Met) + AMP + diphosphate. In terms of biological role, is required not only for elongation of protein synthesis but also for the initiation of all mRNA translation through initiator tRNA(fMet) aminoacylation. The sequence is that of Methionine--tRNA ligase from Acidovorax sp. (strain JS42).